The sequence spans 417 residues: Sulfate adenylyltransferase (417 aa).

Over residues 1-10 (MTSITANQKP) the composition is skewed to polar residues. Residues 1–20 (MTSITANQKPSKLVPPHGSP) are disordered.

Belongs to the sulfate adenylyltransferase family.

The enzyme catalyses sulfate + ATP + H(+) = adenosine 5'-phosphosulfate + diphosphate. It participates in sulfur metabolism; hydrogen sulfide biosynthesis; sulfite from sulfate: step 1/3. The sequence is that of Sulfate adenylyltransferase from Psychrobacter arcticus (strain DSM 17307 / VKM B-2377 / 273-4).